The chain runs to 511 residues: Maturase K (511 aa).

It belongs to the intron maturase 2 family. MatK subfamily.

It is found in the plastid. The protein localises to the chloroplast. Usually encoded in the trnK tRNA gene intron. Probably assists in splicing its own and other chloroplast group II introns. In Acorus calamus var. americanus (American sweet flag), this protein is Maturase K.